The primary structure comprises 444 residues: Ribulose bisphosphate carboxylase (444 aa).

The active-site Proton acceptor is the Lys163. Lys165 contributes to the substrate binding site. Mg(2+) is bound by residues Lys189, Asp191, and Glu192. An N6-carboxylysine modification is found at Lys189. His281 functions as the Proton acceptor in the catalytic mechanism. Substrate is bound by residues Arg282, His314, 367–369 (SGG), and 389–392 (QLGG).

This sequence belongs to the RuBisCO large chain family. Type III subfamily. Homodecamer, consisting of five dimer units which form a ring-like pentagonal structure. This arrangement is essential for its high thermostability. In contrast to form I RuBisCO, the form III RuBisCO is composed solely of large subunits. Mg(2+) serves as cofactor.

It carries out the reaction 2 (2R)-3-phosphoglycerate + 2 H(+) = D-ribulose 1,5-bisphosphate + CO2 + H2O. The enzyme catalyses D-ribulose 1,5-bisphosphate + O2 = 2-phosphoglycolate + (2R)-3-phosphoglycerate + 2 H(+). Catalyzes the addition of molecular CO(2) and H(2)O to ribulose 1,5-bisphosphate (RuBP), generating two molecules of 3-phosphoglycerate (3-PGA). Functions in an archaeal AMP degradation pathway, together with AMP phosphorylase and R15P isomerase. In Thermococcus kodakarensis (strain ATCC BAA-918 / JCM 12380 / KOD1) (Pyrococcus kodakaraensis (strain KOD1)), this protein is Ribulose bisphosphate carboxylase.